Here is a 405-residue protein sequence, read N- to C-terminus: Obg-like ATPase homolog (405 aa).

The 267-residue stretch at 17–283 (PTSGIVGLAN…CKGIASEYFD (267 aa)) folds into the OBG-type G domain. ATP is bound by residues 26–31 (NVGKST) and valine 231. In terms of domain architecture, TGS spans 312–398 (NLISFFTCGP…QDNDIALFKA (87 aa)).

This sequence belongs to the TRAFAC class OBG-HflX-like GTPase superfamily. OBG GTPase family.

Its subcellular location is the mitochondrion. Hydrolyzes ATP, and can also hydrolyze GTP with lower efficiency. Has lower affinity for GTP. In Saccharomyces cerevisiae (strain ATCC 204508 / S288c) (Baker's yeast), this protein is Obg-like ATPase homolog (YLF2).